A 313-amino-acid chain; its full sequence is Synaptophysin (313 aa).

The Cytoplasmic portion of the chain corresponds to 1–25; the sequence is MLLLADMDVVNQLVAGGQFRVVKEP. Positions 21–227 constitute an MARVEL domain; the sequence is VVKEPLGFVK…NLWFVFKETG (207 aa). Residues 26–49 form a helical membrane-spanning segment; it reads LGFVKVLQWVFAIFAFATCGSYSG. Topologically, residues 50 to 106 are vesicular; the sequence is ELQLSVDCANKTKSDLNIEVEFEYPFRLHEVYFEAPTCQGDPKKIFLVGNYSSSAEF. A glycan (N-linked (GlcNAc...) asparagine) is linked at Asn59. A Phosphotyrosine modification is found at Tyr81. Residue Asn99 is glycosylated (N-linked (GlcNAc...) asparagine). The helical transmembrane segment at 107-130 threads the bilayer; sequence FVTVAVFAFLYSMGALATYIFLQN. At 131–137 the chain is on the cytoplasmic side; that stretch reads KYRENNK. The chain crosses the membrane as a helical span at residues 138-161; the sequence is GPMLDFLATAVFAFMWLVSSSAWA. The Vesicular segment spans residues 162-199; that stretch reads KGLSDVKMATDPENIIKGMHVCHQPGNTCKELRDPVTS. The chain crosses the membrane as a helical span at residues 200 to 223; that stretch reads GLNTSVVFGFLNLVLWVGNLWFVF. The Cytoplasmic segment spans residues 224–313; sequence KETGWAAPFL…GAPTSFSNQM (90 aa). The disordered stretch occupies residues 238 to 313; sequence GAPEKQPAPG…GAPTSFSNQM (76 aa). Residues 253-263 are compositionally biased toward gly residues; the sequence is AGYGQGPGGYG. The repeats, Gly/Tyr-rich stretch occupies residues 254–304; that stretch reads GYGQGPGGYGPQDSYGPQGGYQPDYGQPASSGGGGYGPQGDYGQQGYGPQG. Low complexity predominate over residues 264–283; sequence PQDSYGPQGGYQPDYGQPAS. Residues 284 to 302 are compositionally biased toward gly residues; it reads SGGGGYGPQGDYGQQGYGP.

This sequence belongs to the synaptophysin/synaptobrevin family. Homohexamer or homotetramer. Interacts with SRCIN1. Interacts with VAMP2; the interaction is inhibited by interaction of VAPM2 with SEPT8. In terms of processing, ubiquitinated; mediated by SIAH1 or SIAH2 and leading to its subsequent proteasomal degradation. Post-translationally, phosphorylated by SRC. As to expression, characteristic of a type of small (30-80 nm) neurosecretory vesicles, including presynaptic vesicles, but also vesicles of various neuroendocrine cells of both neuronal and epithelial phenotype.

Its subcellular location is the cytoplasmic vesicle. It localises to the secretory vesicle. The protein resides in the synaptic vesicle membrane. It is found in the synapse. The protein localises to the synaptosome. Possibly involved in structural functions as organizing other membrane components or in targeting the vesicles to the plasma membrane. Involved in the regulation of short-term and long-term synaptic plasticity. In Bos taurus (Bovine), this protein is Synaptophysin (SYP).